We begin with the raw amino-acid sequence, 487 residues long: GTPase Der (487 aa).

EngA-type G domains follow at residues 3-166 (PVVA…AEAM) and 199-372 (IKLA…DSAT). GTP-binding positions include 9-16 (GRPNVGKS), 56-60 (DTGGI), 118-121 (NKID), 205-212 (GKPNVGKS), 252-256 (DTAGV), and 317-320 (NKWD). A KH-like domain is found at 373 to 457 (RRVSTSMLTR…PIQLRFQEGD (85 aa)).

This sequence belongs to the TRAFAC class TrmE-Era-EngA-EngB-Septin-like GTPase superfamily. EngA (Der) GTPase family. Associates with the 50S ribosomal subunit.

Functionally, GTPase that plays an essential role in the late steps of ribosome biogenesis. The sequence is that of GTPase Der from Shewanella oneidensis (strain ATCC 700550 / JCM 31522 / CIP 106686 / LMG 19005 / NCIMB 14063 / MR-1).